Consider the following 386-residue polypeptide: Protein MGF 360-4L (386 aa).

The protein belongs to the asfivirus MGF 360 family.

Plays a role in virus cell tropism, and may be required for efficient virus replication in macrophages. The protein is Protein MGF 360-4L of Ornithodoros (relapsing fever ticks).